The sequence spans 57 residues: Somatostatin-2 (57 aa).

Residues Gly1–Arg26 form a disordered region.

Belongs to the somatostatin family.

Its subcellular location is the secreted. Functionally, somatostatin inhibits the release of somatotropin. The chain is Somatostatin-2 (sst2) from Piaractus mesopotamicus (Small-scaled pacu).